The primary structure comprises 241 residues: Platelet-derived growth factor subunit B (241 aa).

Positions 1-20 (MNRCWALFLSLCCYLRLVSA) are cleaved as a signal peptide. Residues 21-81 (EGDPIPEELY…ELESLARGRR (61 aa)) constitute a propeptide, removed in mature form. N63 carries an N-linked (GlcNAc...) asparagine glycan. Disulfide bonds link C97/C141, C130/C178, and C134/C180. A propeptide spans 191–241 (RSPGGSQEQRAKTPQTRVTIRTVRVRRPPKGKHRKFKHTHDKTALKETLGA) (removed in mature form). Basic residues predominate over residues 216–230 (RRPPKGKHRKFKHTH). The interval 216–241 (RRPPKGKHRKFKHTHDKTALKETLGA) is disordered.

This sequence belongs to the PDGF/VEGF growth factor family. In terms of assembly, antiparallel homodimer; disulfide-linked. Antiparallel heterodimer with PDGFA; disulfide-linked. The PDGFB homodimer interacts with PDGFRA and PDGFRB homodimers, and with heterodimers formed by PDGFRA and PDGFRB. The heterodimer composed of PDGFA and PDGFB interacts with PDGFRB homodimers, and with heterodimers formed by PDGFRA and PDGFRB. Interacts with XLKD1. Interacts with LRP1. Interacts with SORL1 (via the N-terminal ectodomain). Interacts with CD82; this interaction inhibits PDGFB-mediated signaling pathway. As to expression, expressed at high levels in the heart, brain (sustantia nigra), placenta and fetal kidney. Expressed at moderate levels in the brain (hippocampus), skeletal muscle, kidney and lung.

The protein resides in the secreted. Its function is as follows. Growth factor that plays an essential role in the regulation of embryonic development, cell proliferation, cell migration, survival and chemotaxis. Potent mitogen for cells of mesenchymal origin. Required for normal proliferation and recruitment of pericytes and vascular smooth muscle cells in the central nervous system, skin, lung, heart and placenta. Required for normal blood vessel development, and for normal development of kidney glomeruli. Plays an important role in wound healing. Signaling is modulated by the formation of heterodimers with PDGFA. This is Platelet-derived growth factor subunit B (PDGFB) from Homo sapiens (Human).